Reading from the N-terminus, the 174-residue chain is MKVLFLTIALSLFSILQAQDSSSSEEQFEGTYFVKAIVTDSEFFEKNKPKALSPLTVTHLSNGDLEAKFTTNMNGICEEIKMKFEKTDKPGIFSTNDGSRQVLIEKTSVRDHWILFCEGELHGMQVRIAKLLGPHTDENPKAFQEFKKFVSLKRFNEEKINIPRQTETCIPEHV.

Residues 1–18 (MKVLFLTIALSLFSILQA) form the signal peptide. Residues C77 and C169 are joined by a disulfide bond.

The protein belongs to the calycin superfamily. Lipocalin family. Mammary gland specific. Secreted in milk.

Its subcellular location is the secreted. Its function is as follows. Probably serves a role in the transport of a small ligand released during the hydrolysis of milk fat. This chain is Late lactation protein B (LLPB), found in Notamacropus eugenii (Tammar wallaby).